We begin with the raw amino-acid sequence, 157 residues long: MALSNYVFGNSAADPFFTEMDRAVNRMINNALGVAPTSAGKAGHTHAPMDIIESPTAFELHADAPGMGPDDVKVELQEGVLMVTGERKLSHTTKEAGGKVWRSERTAYSFSRAFSLPENANPDGITAAMDKGVLVVTVPKREPPAKPEPKRIAVTGA.

A sHSP domain is found at 40–155 (GKAGHTHAPM…KPEPKRIAVT (116 aa)).

Belongs to the small heat shock protein (HSP20) family.

Its subcellular location is the plastid. It localises to the chloroplast. In Chlamydomonas reinhardtii (Chlamydomonas smithii), this protein is Heat shock 22 kDa protein, chloroplastic.